The sequence spans 389 residues: Succinate--CoA ligase [ADP-forming] subunit beta (389 aa).

The ATP-grasp domain occupies 9–246 (KEILRRHNAN…ITEEDPYEVK (238 aa)). ATP-binding positions include Lys-48, 55 to 57 (GRG), Glu-101, Leu-104, and Glu-109. Mg(2+) contacts are provided by Asn-201 and Asp-215. Substrate is bound by residues Asn-266 and 323 to 325 (GIV).

It belongs to the succinate/malate CoA ligase beta subunit family. Heterotetramer of two alpha and two beta subunits. Requires Mg(2+) as cofactor.

It catalyses the reaction succinate + ATP + CoA = succinyl-CoA + ADP + phosphate. The enzyme catalyses GTP + succinate + CoA = succinyl-CoA + GDP + phosphate. The protein operates within carbohydrate metabolism; tricarboxylic acid cycle; succinate from succinyl-CoA (ligase route): step 1/1. Succinyl-CoA synthetase functions in the citric acid cycle (TCA), coupling the hydrolysis of succinyl-CoA to the synthesis of either ATP or GTP and thus represents the only step of substrate-level phosphorylation in the TCA. The beta subunit provides nucleotide specificity of the enzyme and binds the substrate succinate, while the binding sites for coenzyme A and phosphate are found in the alpha subunit. The sequence is that of Succinate--CoA ligase [ADP-forming] subunit beta from Leptospira biflexa serovar Patoc (strain Patoc 1 / Ames).